A 360-amino-acid chain; its full sequence is Protein RecA (360 aa).

65–72 (GPESSGKT) provides a ligand contact to ATP.

Belongs to the RecA family.

It is found in the cytoplasm. Can catalyze the hydrolysis of ATP in the presence of single-stranded DNA, the ATP-dependent uptake of single-stranded DNA by duplex DNA, and the ATP-dependent hybridization of homologous single-stranded DNAs. It interacts with LexA causing its activation and leading to its autocatalytic cleavage. This is Protein RecA from Tolumonas auensis (strain DSM 9187 / NBRC 110442 / TA 4).